The following is a 328-amino-acid chain: Alanine racemase (328 aa).

Lys33 (proton acceptor; specific for D-alanine) is an active-site residue. Lys33 bears the N6-(pyridoxal phosphate)lysine mark. Arg118 contributes to the substrate binding site. Tyr237 functions as the Proton acceptor; specific for L-alanine in the catalytic mechanism. Met283 is a binding site for substrate.

It belongs to the alanine racemase family. Pyridoxal 5'-phosphate is required as a cofactor.

The catalysed reaction is L-alanine = D-alanine. The protein operates within amino-acid biosynthesis; D-alanine biosynthesis; D-alanine from L-alanine: step 1/1. Functionally, catalyzes the interconversion of L-alanine and D-alanine. May also act on other amino acids. In Campylobacter jejuni subsp. doylei (strain ATCC BAA-1458 / RM4099 / 269.97), this protein is Alanine racemase (alr).